We begin with the raw amino-acid sequence, 93 residues long: Acylphosphatase (93 aa).

Positions 7–93 (RLTAWVHGRV…ADAIAGFTER (87 aa)) constitute an Acylphosphatase-like domain. Catalysis depends on residues R22 and N40.

It belongs to the acylphosphatase family.

The catalysed reaction is an acyl phosphate + H2O = a carboxylate + phosphate + H(+). This is Acylphosphatase (acyP) from Mycolicibacterium vanbaalenii (strain DSM 7251 / JCM 13017 / BCRC 16820 / KCTC 9966 / NRRL B-24157 / PYR-1) (Mycobacterium vanbaalenii).